The primary structure comprises 335 residues: Acetyl-coenzyme A carboxylase carboxyl transferase subunit alpha (335 aa).

A CoA carboxyltransferase C-terminal domain is found at 48–308; that stretch reads TLEKKVEALR…KGILIEELSA (261 aa).

This sequence belongs to the AccA family. As to quaternary structure, acetyl-CoA carboxylase is a heterohexamer composed of biotin carboxyl carrier protein (AccB), biotin carboxylase (AccC) and two subunits each of ACCase subunit alpha (AccA) and ACCase subunit beta (AccD).

It localises to the cytoplasm. It carries out the reaction N(6)-carboxybiotinyl-L-lysyl-[protein] + acetyl-CoA = N(6)-biotinyl-L-lysyl-[protein] + malonyl-CoA. Its pathway is lipid metabolism; malonyl-CoA biosynthesis; malonyl-CoA from acetyl-CoA: step 1/1. In terms of biological role, component of the acetyl coenzyme A carboxylase (ACC) complex. First, biotin carboxylase catalyzes the carboxylation of biotin on its carrier protein (BCCP) and then the CO(2) group is transferred by the carboxyltransferase to acetyl-CoA to form malonyl-CoA. This Chlorobium phaeovibrioides (strain DSM 265 / 1930) (Prosthecochloris vibrioformis (strain DSM 265)) protein is Acetyl-coenzyme A carboxylase carboxyl transferase subunit alpha.